We begin with the raw amino-acid sequence, 65 residues long: Large ribosomal subunit protein bL35 (65 aa).

The disordered stretch occupies residues 1–26 (MPKMKTHRGAAKRFKKTGSGKLKRAK).

This sequence belongs to the bacterial ribosomal protein bL35 family.

In Clostridium novyi (strain NT), this protein is Large ribosomal subunit protein bL35.